The sequence spans 670 residues: Nitrate import ATP-binding protein NrtC (670 aa).

Residues 5-239 enclose the ABC transporter domain; sequence IEIDHVDRIF…RPRHRLEVVN (235 aa). 42–49 lines the ATP pocket; sequence GHSGCGKS. The tract at residues 255–278 is linker; it reads NQQKRAKKVGAVSQFAEAMGGNGL. A nrtA-like region spans residues 279 to 670; sequence EKINLDLGFI…LIDQIDQVNQ (392 aa).

It belongs to the ABC transporter superfamily. Nitrate/nitrite/cyanate uptake transporter (NitT) (TC 3.A.1.16) family. The complex is composed of two ATP-binding proteins (NrtC and NrtD), two transmembrane proteins (NrtB) and a solute-binding protein (NrtA).

The protein localises to the cell inner membrane. It carries out the reaction nitrate(out) + ATP + H2O = nitrate(in) + ADP + phosphate + H(+). In terms of biological role, part of the ABC transporter complex NrtABCD involved in nitrate uptake. The complex is probably also involved in nitrite transport. Probably responsible for energy coupling to the transport system. This Synechocystis sp. (strain ATCC 27184 / PCC 6803 / Kazusa) protein is Nitrate import ATP-binding protein NrtC (nrtC).